The chain runs to 334 residues: Probable 3-hydroxyisobutyrate dehydrogenase-like 1, mitochondrial (334 aa).

Residues 1–23 constitute a mitochondrion transit peptide; that stretch reads MPLLLRRFPSPSVVSSFFLRRSM. Position 24 is an N-acetylalanine (alanine 24). NAD(+) contacts are provided by residues 38-67 and threonine 133; that span reads TKIG…TVFN. Lysine 207 is an active-site residue. Lysine 275 contributes to the NAD(+) binding site.

This sequence belongs to the HIBADH-related family. 3-hydroxyisobutyrate dehydrogenase subfamily.

The protein localises to the mitochondrion. It carries out the reaction 3-hydroxy-2-methylpropanoate + NAD(+) = 2-methyl-3-oxopropanoate + NADH + H(+). It participates in amino-acid degradation; L-valine degradation. In Arabidopsis thaliana (Mouse-ear cress), this protein is Probable 3-hydroxyisobutyrate dehydrogenase-like 1, mitochondrial.